The following is a 430-amino-acid chain: Asparagine--tRNA ligase (430 aa).

Belongs to the class-II aminoacyl-tRNA synthetase family. Homodimer.

It is found in the cytoplasm. The catalysed reaction is tRNA(Asn) + L-asparagine + ATP = L-asparaginyl-tRNA(Asn) + AMP + diphosphate + H(+). This Staphylococcus saprophyticus subsp. saprophyticus (strain ATCC 15305 / DSM 20229 / NCIMB 8711 / NCTC 7292 / S-41) protein is Asparagine--tRNA ligase.